A 303-amino-acid chain; its full sequence is Heme A synthase (303 aa).

The Cytoplasmic segment spans residues 1-8 (MFGKKNLK). The helical transmembrane segment at 9-29 (WLGVVATLMMTFVQLGGALVT) threads the bilayer. Residues 30-67 (KTGSADGCGSSWPLCHGALIPEFFPIDTIIELSHRAVS) are Extracellular-facing. Residues Cys-37 and Cys-44 are joined by a disulfide bond. Residue Glu-60 is part of the active site. His-63 contributes to the heme o binding site. The chain crosses the membrane as a helical span at residues 68–88 (ALSLLMVLWLVITAWKHIGYI). The Cytoplasmic segment spans residues 89–93 (KEIKP). Residues 94–114 (LSIISVGFLLLQALIGAAAVI) form a helical membrane-spanning segment. Residues 115 to 125 (WQQNDYVLALH) are Extracellular-facing. Position 125 (His-125) interacts with heme o. Residues 126–146 (FGISLISFSSVFLITLIIFSI) form a helical membrane-spanning segment. The Cytoplasmic segment spans residues 147–163 (DQKYEADELYIKKPLRR). The helical transmembrane segment at 164–184 (LTWLMAIIIYCGVYTGALVRH) threads the bilayer. Residues 185 to 215 (ADASLAYGGWPLPFHDLVPHSEQDWVQLTHR) are Extracellular-facing. His-214 serves as a coordination point for heme b. Residues 216–236 (IMAFIVFTIIMITYIHAVKNY) traverse the membrane as a helical segment. At 237 to 244 (PNNRTVHY) the chain is on the cytoplasmic side. The chain crosses the membrane as a helical span at residues 245 to 265 (GYTAAFILVILQVITGALSIM). Residues 266–270 (TNVNL) lie on the Extracellular side of the membrane. Residues 271–291 (LIALFHALFITYLFGMTTYFI) form a helical membrane-spanning segment. Residue His-276 coordinates heme b. The Cytoplasmic segment spans residues 292–303 (MLMLRSVRSDKQ).

This sequence belongs to the COX15/CtaA family. Type 1 subfamily. Interacts with CtaB. Requires heme b as cofactor.

The protein localises to the cell membrane. The catalysed reaction is Fe(II)-heme o + 2 A + H2O = Fe(II)-heme a + 2 AH2. The protein operates within porphyrin-containing compound metabolism; heme A biosynthesis; heme A from heme O: step 1/1. Functionally, catalyzes the conversion of heme O to heme A by two successive hydroxylations of the methyl group at C8. The first hydroxylation forms heme I, the second hydroxylation results in an unstable dihydroxymethyl group, which spontaneously dehydrates, resulting in the formyl group of heme A. The chain is Heme A synthase from Staphylococcus aureus (strain MSSA476).